The following is a 96-amino-acid chain: Small ribosomal subunit protein bS18 (96 aa).

Positions 1–22 (MYKDVDSHQRDSRSDGHQDGFK) are enriched in basic and acidic residues. The tract at residues 1–25 (MYKDVDSHQRDSRSDGHQDGFKKNP) is disordered.

It belongs to the bacterial ribosomal protein bS18 family. Part of the 30S ribosomal subunit. Forms a tight heterodimer with protein bS6.

Functionally, binds as a heterodimer with protein bS6 to the central domain of the 16S rRNA, where it helps stabilize the platform of the 30S subunit. The protein is Small ribosomal subunit protein bS18 of Borrelia hermsii (strain HS1 / DAH).